Consider the following 655-residue polypeptide: Putative sensor protein Sfri_3689 (655 aa).

Positions M1–A17 are cleaved as a signal peptide. Residues F252–I272 form a helical membrane-spanning segment. The 235-residue stretch at G419–Q653 folds into the Histidine kinase domain. H422 is modified (phosphohistidine; by autocatalysis).

It is found in the cell membrane. It catalyses the reaction ATP + protein L-histidine = ADP + protein N-phospho-L-histidine.. This is Putative sensor protein Sfri_3689 from Shewanella frigidimarina (strain NCIMB 400).